The sequence spans 122 residues: Seripauperin-5 (122 aa).

A helical transmembrane segment spans residues 7–24 (IAAGVAAIAAGASAAATT).

The protein belongs to the SRP1/TIP1 family. Seripauperin subfamily.

The protein resides in the membrane. The protein is Seripauperin-5 (PAU5) of Saccharomyces cerevisiae (strain ATCC 204508 / S288c) (Baker's yeast).